Reading from the N-terminus, the 779-residue chain is Transcription activator of gluconeogenesis BDCG_02812 (779 aa).

The tract at residues 1 to 70 (MTASTRNGSP…NAKDPLRPRR (70 aa)) is disordered. Positions 25–61 (KSMTTTPANPPETKSQTNGKGSGTAQSSQKPASTSAN) are enriched in polar residues. The segment at residues 77 to 105 (CFACQRAHLTCGDERPCQRCIKRGLQDAC) is a DNA-binding region (zn(2)-C6 fungal-type). Disordered regions lie at residues 135-163 (QANT…QSVS), 202-239 (SVFH…SVSG), 285-344 (GAGD…ANPR), 401-421 (TNLM…PGLK), 559-590 (GSSL…PHTG), and 655-732 (FHGK…QTWG). The span at 202–226 (SVFHAQSPSSTQNFDLSSNPQTQNL) shows a compositional bias: polar residues. Residues 227–238 (SSAMSQTASSVS) are compositionally biased toward low complexity. Polar residues-rich tracts occupy residues 291–322 (PSDS…NQSP), 333–344 (WNPTGQGQANPR), and 401–416 (TNLM…SRIS). Over residues 560–572 (SSLSSASSVRGSS) the composition is skewed to low complexity. Residues 573–586 (TFTPRNNNTHNSID) are compositionally biased toward polar residues. The span at 672-719 (TGTTTSGDVATTTATGTSTSNGANANTNGNNTNPNDPSSAASSSASSA) shows a compositional bias: low complexity. Polar residues predominate over residues 720–729 (LQGPQQSPRQ).

This sequence belongs to the ERT1/acuK family.

Its subcellular location is the nucleus. Functionally, transcription factor which regulates nonfermentable carbon utilization. Activator of gluconeogenetic genes. The protein is Transcription activator of gluconeogenesis BDCG_02812 of Ajellomyces dermatitidis (strain ER-3 / ATCC MYA-2586) (Blastomyces dermatitidis).